Reading from the N-terminus, the 1423-residue chain is ABC transporter G family member 40 (1423 aa).

Residues 1–19 show a composition bias toward polar residues; sequence MEGTSFHQASNSMRRNSSV. A disordered region spans residues 1–36; it reads MEGTSFHQASNSMRRNSSVWKKDSGREIFSRSSREE. Asn-16 carries N-linked (GlcNAc...) asparagine glycosylation. Residues 20-34 show a composition bias toward basic and acidic residues; that stretch reads WKKDSGREIFSRSSR. The 274-residue stretch at 154-427 folds into the ABC transporter 1 domain; that stretch reads LNTLHLVPNR…FETMGFKCPP (274 aa). 187–194 serves as a coordination point for ATP; it reads GPPSSGKT. The N-linked (GlcNAc...) asparagine glycan is linked to Asn-376. In terms of domain architecture, ABC transmembrane type-2 1 spans 505–718; it reads ELVKTSFSRE…GQNAILANEF (214 aa). The next 6 helical transmembrane spans lie at 523–543, 562–582, 611–631, 643–663, 667–687, and 696–716; these read FVYYFKFGQLLVMAFLTMTLF, ALFFILMMLMFNGMSELSMTI, IPISFMEAALTTFITYYVIGF, ILLVLMNQMASALFKMVAALG, IVANTFGAFAMLVFFALGGVV, and WWIWGYWISPIMYGQNAILAN. Asn-729 carries an N-linked (GlcNAc...) asparagine glycan. Residues 756–776 form a helical membrane-spanning segment; the sequence is GALLGFVVLFNFGFTLALTFL. Positions 825–1077 constitute an ABC transporter 2 domain; it reads ITFDNVVYSV…HLINYFESIQ (253 aa). 870–877 provides a ligand contact to ATP; it reads GVSGAGKT. The N-linked (GlcNAc...) asparagine glycan is linked to Asn-895. The residue at position 962 (Thr-962) is a Phosphothreonine. Residues 1150–1364 enclose the ABC transmembrane type-2 2 domain; sequence TQCMASLWKQ…TLYGLIASQF (215 aa). The next 6 helical transmembrane spans lie at 1174–1194, 1207–1227, 1257–1277, 1284–1304, 1314–1334, and 1341–1361; these read FLFTIGIALMFGTMFWDLGGK, SMYTAVLFLGLQNAASVQPVV, IPYVLVQAIVYGLIVYAMIGF, FFWYLFFMYGSFLTFTFYGMM, IASVVSSAFYGIWNLFSGFLI, and VWWEWYYWLCPVAWTLYGLIA. N-linked (GlcNAc...) asparagine glycosylation is present at Asn-1375. A helical membrane pass occupies residues 1395 to 1415; sequence VVAAMNVIFPLLFAVIFAIGI.

This sequence belongs to the ABC transporter superfamily. ABCG family. PDR (TC 3.A.1.205) subfamily. Interacts with LECRK91 and LECRK92. Mostly observed in inflorescence meristems relative to cauline leaves and developing siliques. Ubiquitous with higher levels in leaves, stems and flowers. Also present in primary and lateral roots. In seeds, mainly expressed in the embryo and, to a lesser extent, in the endosperm.

Its subcellular location is the cell membrane. The catalysed reaction is abscisate(out) + ATP + H2O = abscisate(in) + ADP + phosphate + H(+). With respect to regulation, inhibited by glibenclamide, verapamil and vanadate (ABC transporters inhibitors). In terms of biological role, high affinity abscisic acid (ABA) transporter that mediates the import of ABA, with a preference for (+)-ABA, through the plasma membrane, especially in guard cells, and is involved in the intercellular and intracellular ABA signaling pathways leading, for example, to stomatal closure, thus conferring drought tolerance. Together with ABCG30, import into the embryo the ABA delivered from the endosperm via ABCG25 and ABCG31-mediated export to suppress radicle extension and subsequent embryonic growth. May be a general defense protein. Functions as a pump to exclude Pb(2+) ions and/or Pb(2+)-containing toxic compounds from the cytoplasm. Contributes to Pb(2+) ions resistance. Confers some resistance to the terpene sclareol. (Microbial infection) Involved in resistance response to the pathogenic oomycetes Phytophthora infestans and Phytophthora capsici. The polypeptide is ABC transporter G family member 40 (Arabidopsis thaliana (Mouse-ear cress)).